Reading from the N-terminus, the 438-residue chain is Coenzyme A disulfide reductase (438 aa).

8 to 33 is a binding site for FAD; that stretch reads GAVAGGATCASQIRRLDKESDIIIFE. Substrate-binding residues include threonine 15, glutamine 19, arginine 22, serine 39, and asparagine 42. Cysteine 43 acts as the Nucleophile in catalysis. Cysteine 43 serves as the catalytic Redox-active. Lysine 71 is a binding site for substrate. 151-166 provides a ligand contact to NADP(+); sequence VLVVGAGYVSLEVLEN. 267-277 lines the FAD pocket; that stretch reads TNVPNIYAIGD. Histidine 299 is a binding site for substrate. Residue tyrosine 419 participates in FAD binding. A substrate-binding site is contributed by lysine 427.

This sequence belongs to the class-III pyridine nucleotide-disulfide oxidoreductase family. Homodimer. Requires FAD as cofactor.

It catalyses the reaction NADP(+) + 2 CoA = CoA-disulfide + NADPH + H(+). Its function is as follows. Catalyzes specifically the NADPH-dependent reduction of coenzyme A disulfide. The sequence is that of Coenzyme A disulfide reductase from Staphylococcus aureus (strain USA300).